The sequence spans 133 residues: Ribonuclease VapC1 (133 aa).

Mg(2+)-binding residues include D7 and D98.

This sequence belongs to the PINc/VapC protein family. It depends on Mg(2+) as a cofactor.

In terms of biological role, toxic component of a type II toxin-antitoxin (TA) system. The cognate antitoxin is VapB1. The protein is Ribonuclease VapC1 of Mycobacterium tuberculosis (strain CDC 1551 / Oshkosh).